Consider the following 469-residue polypeptide: Glutamate--tRNA ligase (469 aa).

The 'HIGH' region signature appears at 9–19 (PSPTGFLHVGG). Positions 236–240 (KLSKR) match the 'KMSKS' region motif. Position 239 (K239) interacts with ATP.

This sequence belongs to the class-I aminoacyl-tRNA synthetase family. Glutamate--tRNA ligase type 1 subfamily. In terms of assembly, monomer.

The protein localises to the cytoplasm. It carries out the reaction tRNA(Glu) + L-glutamate + ATP = L-glutamyl-tRNA(Glu) + AMP + diphosphate. Its function is as follows. Catalyzes the attachment of glutamate to tRNA(Glu) in a two-step reaction: glutamate is first activated by ATP to form Glu-AMP and then transferred to the acceptor end of tRNA(Glu). The polypeptide is Glutamate--tRNA ligase (Shewanella amazonensis (strain ATCC BAA-1098 / SB2B)).